The chain runs to 354 residues: Virulence plasmid protein pGP2-D (354 aa).

This is Virulence plasmid protein pGP2-D from Chlamydia trachomatis serovar L2 (strain ATCC VR-902B / DSM 19102 / 434/Bu).